We begin with the raw amino-acid sequence, 145 residues long: Large ribosomal subunit protein bL17 (145 aa).

This sequence belongs to the bacterial ribosomal protein bL17 family. As to quaternary structure, part of the 50S ribosomal subunit. Contacts protein L32.

The sequence is that of Large ribosomal subunit protein bL17 from Orientia tsutsugamushi (strain Boryong) (Rickettsia tsutsugamushi).